Reading from the N-terminus, the 762-residue chain is Alpha-xylosidase XylQ (762 aa).

The active-site Nucleophile is D414. E417 is an active-site residue.

It belongs to the glycosyl hydrolase 31 family.

It localises to the cell membrane. The catalysed reaction is Hydrolysis of terminal, non-reducing alpha-D-xylose residues with release of alpha-D-xylose.. In terms of biological role, involved in the metabolism of isoprimeverose. Hydrolyzes isoprimeverose into equimolar amounts of glucose and xylose. In vitro, can also use p-nitrophenyl-alpha-D-xylopyranoside (alpha-p-NPX). This Lactiplantibacillus pentosus (Lactobacillus pentosus) protein is Alpha-xylosidase XylQ.